A 444-amino-acid polypeptide reads, in one-letter code: Sonic hedgehog protein (444 aa).

An N-terminal signal peptide occupies residues 1 to 24 (MLVATQSLLLLSFICTLVTPPGLA). Cys25 carries N-palmitoyl cysteine lipidation. The Cardin-Weintraub signature appears at 33-39 (KRRHPKK). 7 residues coordinate Ca(2+): Glu90, Glu91, Asp96, Thr126, Glu127, Asp130, and Asp132. 3 residues coordinate Zn(2+): His141, Asp148, and His183. A lipid anchor (Cholesterol glycine ester) is attached at Gly198. 3 consecutive repeat copies span residues 386 to 393 (QVDLQSHH), 394 to 401 (QVDLQSHH), and 403 to 409 (VDLQSHH). A 3 X 8 AA tandem repeats of Q-V-D-L-Q-S-H-H region spans residues 386–409 (QVDLQSHHQVDLQSHHQVDLQSHH).

This sequence belongs to the hedgehog family. As to quaternary structure, interacts with HHATL/GUP1 which negatively regulates HHAT-mediated palmitoylation of the SHH N-terminus. Interacts with BOC and CDON. Interacts with HHIP. Interacts with DISP1 via its cholesterol anchor. Interacts with SCUBE2. In terms of assembly, multimer. Post-translationally, the C-terminal domain displays an autoproteolysis activity and a cholesterol transferase activity. Both activities result in the cleavage of the full-length protein and covalent attachment of a cholesterol moiety to the C-terminal of the newly generated N-terminal fragment (ShhN). Cholesterylation is required for the sonic hedgehog protein N-product targeting to lipid rafts and multimerization. ShhN is the active species in both local and long-range signaling, whereas the C-product (ShhC) is degraded in the reticulum endoplasmic. In terms of processing, N-palmitoylation by HHAT of ShhN is required for sonic hedgehog protein N-product multimerization and full activity. It is a prerequisite for the membrane-proximal positioning and the subsequent shedding of this N-terminal peptide. The lipidated N- and C-terminal peptides of ShhNp can be cleaved (shedding). The N-terminal palmitoylated peptide is cleaved at the Cardin-Weintraub (CW) motif site. The cleavage reduced the interactions with heparan sulfate. The cleavage is enhanced by SCUBE2. Strongly expressed in notochord and neural floor plate during embryogenesis. In tadpole, high expression is observed in pancreas/stomach, moderate expression in tail, and low expression in intestine, brain, and hind limb.

It localises to the endoplasmic reticulum membrane. Its subcellular location is the golgi apparatus membrane. The protein localises to the cell membrane. The catalysed reaction is glycyl-L-cysteinyl-[protein] + cholesterol + H(+) = [protein]-C-terminal glycyl cholesterol ester + N-terminal L-cysteinyl-[protein]. The C-terminal part of the sonic hedgehog protein precursor displays an autoproteolysis and a cholesterol transferase activity. Both activities result in the cleavage of the full-length protein into two parts (ShhN and ShhC) followed by the covalent attachment of a cholesterol moiety to the C-terminal of the newly generated ShhN. Both activities occur in the endoplasmic reticulum. Once cleaved, ShhC is degraded in the endoplasmic reticulum. Its function is as follows. The dually lipidated sonic hedgehog protein N-product (ShhNp) is a morphogen which is essential for a variety of patterning events during development. Induces ventral cell fate in the neural tube and somites. Involved in the patterning of the anterior-posterior axis of the developing limb bud. Essential for axon guidance. Binds to the patched (PTCH1) receptor, which functions in association with smoothened (SMO), to activate the transcription of target genes. In the absence of SHH, PTCH1 represses the constitutive signaling activity of SMO. The chain is Sonic hedgehog protein from Xenopus laevis (African clawed frog).